Reading from the N-terminus, the 327-residue chain is Undecaprenyl-phosphate 4-deoxy-4-formamido-L-arabinose transferase (327 aa).

Topologically, residues 1–235 (MFDAAPIKKV…TCLTTTPLRL (235 aa)) are cytoplasmic. The helical transmembrane segment at 236-256 (LSLLGSVIAIGGFSLSVLLIV) threads the bilayer. The Periplasmic portion of the chain corresponds to 257–269 (LRLALGPQWAAEG). The helical transmembrane segment at 270–290 (VFMLFAVLFTFIGAQFIGMGL) threads the bilayer. The Cytoplasmic portion of the chain corresponds to 291–327 (LGEYIGRIYNDVRARPRYFVQQVIYPESTPFTEESHQ).

This sequence belongs to the glycosyltransferase 2 family.

It localises to the cell inner membrane. The enzyme catalyses UDP-4-deoxy-4-formamido-beta-L-arabinose + di-trans,octa-cis-undecaprenyl phosphate = 4-deoxy-4-formamido-alpha-L-arabinopyranosyl di-trans,octa-cis-undecaprenyl phosphate + UDP. It functions in the pathway glycolipid biosynthesis; 4-amino-4-deoxy-alpha-L-arabinose undecaprenyl phosphate biosynthesis; 4-amino-4-deoxy-alpha-L-arabinose undecaprenyl phosphate from UDP-4-deoxy-4-formamido-beta-L-arabinose and undecaprenyl phosphate: step 1/2. It participates in bacterial outer membrane biogenesis; lipopolysaccharide biosynthesis. Its function is as follows. Catalyzes the transfer of 4-deoxy-4-formamido-L-arabinose from UDP to undecaprenyl phosphate. The modified arabinose is attached to lipid A and is required for resistance to polymyxin and cationic antimicrobial peptides. This chain is Undecaprenyl-phosphate 4-deoxy-4-formamido-L-arabinose transferase, found in Salmonella agona (strain SL483).